A 242-amino-acid polypeptide reads, in one-letter code: Ribosomal RNA small subunit methyltransferase G (242 aa).

S-adenosyl-L-methionine contacts are provided by residues glycine 78, phenylalanine 83, 129–130 (AE), and arginine 148. The interval 221-242 (TKKRYPRKAGVPEKSPIGGKHD) is disordered.

It belongs to the methyltransferase superfamily. RNA methyltransferase RsmG family.

It is found in the cytoplasm. Specifically methylates the N7 position of a guanine in 16S rRNA. The polypeptide is Ribosomal RNA small subunit methyltransferase G (Oenococcus oeni (strain ATCC BAA-331 / PSU-1)).